The following is a 146-amino-acid chain: Hemoglobin subunit beta (146 aa).

V1 carries the N-acetylvaline modification. The region spanning 2–146 is the Globin domain; that stretch reads HLTDAEKAAV…VATALAHKYH (145 aa). S44 bears the Phosphoserine mark. K59 carries the post-translational modification N6-acetyllysine. H63 is a heme b binding site. N6-acetyllysine is present on K82. H92 contacts heme b. C93 carries the S-nitrosocysteine modification. Residue K144 is modified to N6-acetyllysine.

Belongs to the globin family. Heterotetramer of two alpha chains and two beta chains. As to expression, red blood cells.

Involved in oxygen transport from the lung to the various peripheral tissues. The chain is Hemoglobin subunit beta (HBB) from Spalax ehrenbergi (Middle East blind mole rat).